The chain runs to 282 residues: Putative 4-diphosphocytidyl-2-C-methyl-D-erythritol kinase (282 aa).

The active site involves Lys9. 93 to 103 (PVSAGLAGGSA) is a binding site for ATP. Asp135 is an active-site residue.

The protein belongs to the GHMP kinase family. IspE subfamily.

It carries out the reaction 4-CDP-2-C-methyl-D-erythritol + ATP = 4-CDP-2-C-methyl-D-erythritol 2-phosphate + ADP + H(+). In terms of biological role, catalyzes the phosphorylation of the position 2 hydroxy group of 4-diphosphocytidyl-2C-methyl-D-erythritol. The protein is Putative 4-diphosphocytidyl-2-C-methyl-D-erythritol kinase of Staphylococcus aureus (strain MSSA476).